Here is a 741-residue protein sequence, read N- to C-terminus: uncharacterized protein (741 aa).

Residues 1-17 show a composition bias toward polar residues; that stretch reads MDSNTNENNSHASSNER. The segment at 1–50 is disordered; the sequence is MDSNTNENNSHASSNERQSSEGHDDYLNRNPNSEATEGEEGTHPTTGTQP. Positions 18 to 27 are enriched in basic and acidic residues; it reads QSSEGHDDYL. The RING-type 1; degenerate zinc-finger motif lies at 107 to 150; sequence CPICYDDMNENDEKQATKMPCGHIFGKNCLQKWLENHCTCPLCR. Composition is skewed to polar residues over residues 177 to 193, 252 to 263, and 277 to 302; these read GNQGNTAVSQENASNGV, PDSNTSTPTTRS, and NASSRQETTPSDSRPSTLTSLFNAFF. Disordered regions lie at residues 177 to 214, 238 to 387, 500 to 543, 561 to 619, 638 to 688, and 713 to 741; these read GNQGNTAVSQENASNGVHSDFHPSEELNNANTDGRTGV, SATN…NTNR, QPAV…PGIT, ENRM…TPTH, STPS…PQCQ, and RCQQSTSNSENQMDEEIGECPKCRNEEHK. Positions 316 to 332 are enriched in low complexity; the sequence is TSNLTSNSGSMTNSTST. Polar residues-rich tracts occupy residues 333–344 and 357–386; these read DLPTSNLPSQNA and PPNLLNLPTASPESTSWLPGSQTNIPANTN. Polar residues-rich tracts occupy residues 563–586, 604–619, and 652–661; these read RMNQTRSESSTPAQQSAAGSSINV, ENSSEVAGSRNQTPTH, and SKVSSGTSTP. An RING-type 2; degenerate zinc finger spans residues 687 to 736; sequence CQLEDQGICDPNDRFVHFECGHSVHERCQQSTSNSENQMDEEIGECPKCR. Residues 731 to 741 show a composition bias toward basic and acidic residues; that stretch reads ECPKCRNEEHK.

Its subcellular location is the nucleus. This is an uncharacterized protein from Schizosaccharomyces pombe (strain 972 / ATCC 24843) (Fission yeast).